The chain runs to 940 residues: Valine--tRNA ligase (940 aa).

Residues proline 47–histidine 57 carry the 'HIGH' region motif. Positions lysine 564–serine 568 match the 'KMSKS' region motif. Lysine 567 serves as a coordination point for ATP. The stretch at proline 872 to serine 938 forms a coiled coil.

The protein belongs to the class-I aminoacyl-tRNA synthetase family. ValS type 1 subfamily. Monomer.

It is found in the cytoplasm. It carries out the reaction tRNA(Val) + L-valine + ATP = L-valyl-tRNA(Val) + AMP + diphosphate. Its function is as follows. Catalyzes the attachment of valine to tRNA(Val). As ValRS can inadvertently accommodate and process structurally similar amino acids such as threonine, to avoid such errors, it has a 'posttransfer' editing activity that hydrolyzes mischarged Thr-tRNA(Val) in a tRNA-dependent manner. The chain is Valine--tRNA ligase from Chlamydia caviae (strain ATCC VR-813 / DSM 19441 / 03DC25 / GPIC) (Chlamydophila caviae).